Consider the following 375-residue polypeptide: Queuine tRNA-ribosyltransferase (375 aa).

Asp90 (proton acceptor) is an active-site residue. Substrate contacts are provided by residues 90–94 (DSGGF), Asp144, Gln190, and Gly217. An RNA binding region spans residues 248–254 (GIGTPHY). Catalysis depends on Asp267, which acts as the Nucleophile. The RNA binding; important for wobble base 34 recognition stretch occupies residues 272–276 (ARITR). Residues Cys305, Cys307, Cys310, and His336 each contribute to the Zn(2+) site.

The protein belongs to the queuine tRNA-ribosyltransferase family. Homodimer. Within each dimer, one monomer is responsible for RNA recognition and catalysis, while the other monomer binds to the replacement base PreQ1. Zn(2+) is required as a cofactor.

The catalysed reaction is 7-aminomethyl-7-carbaguanine + guanosine(34) in tRNA = 7-aminomethyl-7-carbaguanosine(34) in tRNA + guanine. Its pathway is tRNA modification; tRNA-queuosine biosynthesis. Its function is as follows. Catalyzes the base-exchange of a guanine (G) residue with the queuine precursor 7-aminomethyl-7-deazaguanine (PreQ1) at position 34 (anticodon wobble position) in tRNAs with GU(N) anticodons (tRNA-Asp, -Asn, -His and -Tyr). Catalysis occurs through a double-displacement mechanism. The nucleophile active site attacks the C1' of nucleotide 34 to detach the guanine base from the RNA, forming a covalent enzyme-RNA intermediate. The proton acceptor active site deprotonates the incoming PreQ1, allowing a nucleophilic attack on the C1' of the ribose to form the product. After dissociation, two additional enzymatic reactions on the tRNA convert PreQ1 to queuine (Q), resulting in the hypermodified nucleoside queuosine (7-(((4,5-cis-dihydroxy-2-cyclopenten-1-yl)amino)methyl)-7-deazaguanosine). This is Queuine tRNA-ribosyltransferase from Borreliella burgdorferi (strain ZS7) (Borrelia burgdorferi).